A 474-amino-acid chain; its full sequence is Siroheme synthase (474 aa).

The precorrin-2 dehydrogenase /sirohydrochlorin ferrochelatase stretch occupies residues 1 to 203; it reads MDYLPIFLKL…GRAEDAERVL (203 aa). Residues 22–23 and 43–44 contribute to the NAD(+) site; these read EV and AS. Residues 219–474 are uroporphyrinogen-III C-methyltransferase; that stretch reads GSVALVGAGP…QETEGRSGNG (256 aa). Proline 228 contributes to the S-adenosyl-L-methionine binding site. Aspartate 251 (proton acceptor) is an active-site residue. The Proton donor role is filled by lysine 273. S-adenosyl-L-methionine-binding positions include 304–306, isoleucine 309, 334–335, methionine 387, and glycine 416; these read GGD and TA.

This sequence in the N-terminal section; belongs to the precorrin-2 dehydrogenase / sirohydrochlorin ferrochelatase family. The protein in the C-terminal section; belongs to the precorrin methyltransferase family.

The enzyme catalyses uroporphyrinogen III + 2 S-adenosyl-L-methionine = precorrin-2 + 2 S-adenosyl-L-homocysteine + H(+). The catalysed reaction is precorrin-2 + NAD(+) = sirohydrochlorin + NADH + 2 H(+). It carries out the reaction siroheme + 2 H(+) = sirohydrochlorin + Fe(2+). Its pathway is cofactor biosynthesis; adenosylcobalamin biosynthesis; precorrin-2 from uroporphyrinogen III: step 1/1. It participates in cofactor biosynthesis; adenosylcobalamin biosynthesis; sirohydrochlorin from precorrin-2: step 1/1. It functions in the pathway porphyrin-containing compound metabolism; siroheme biosynthesis; precorrin-2 from uroporphyrinogen III: step 1/1. The protein operates within porphyrin-containing compound metabolism; siroheme biosynthesis; siroheme from sirohydrochlorin: step 1/1. Its pathway is porphyrin-containing compound metabolism; siroheme biosynthesis; sirohydrochlorin from precorrin-2: step 1/1. Functionally, multifunctional enzyme that catalyzes the SAM-dependent methylations of uroporphyrinogen III at position C-2 and C-7 to form precorrin-2 via precorrin-1. Then it catalyzes the NAD-dependent ring dehydrogenation of precorrin-2 to yield sirohydrochlorin. Finally, it catalyzes the ferrochelation of sirohydrochlorin to yield siroheme. The chain is Siroheme synthase from Methylococcus capsulatus (strain ATCC 33009 / NCIMB 11132 / Bath).